Consider the following 215-residue polypeptide: Nucleoside triphosphate pyrophosphatase (215 aa).

Residue D77 is the Proton acceptor of the active site.

Belongs to the Maf family. Requires a divalent metal cation as cofactor.

The protein localises to the cytoplasm. It catalyses the reaction a ribonucleoside 5'-triphosphate + H2O = a ribonucleoside 5'-phosphate + diphosphate + H(+). The catalysed reaction is a 2'-deoxyribonucleoside 5'-triphosphate + H2O = a 2'-deoxyribonucleoside 5'-phosphate + diphosphate + H(+). In terms of biological role, nucleoside triphosphate pyrophosphatase. May have a dual role in cell division arrest and in preventing the incorporation of modified nucleotides into cellular nucleic acids. The protein is Nucleoside triphosphate pyrophosphatase of Rickettsia peacockii (strain Rustic).